A 144-amino-acid chain; its full sequence is Large ribosomal subunit protein uL15 (144 aa).

Residues 20-49 (GRGIGSGLGKTGGRGHKGQKSRSGGFHKVG) are disordered. The segment covering 21–31 (RGIGSGLGKTG) has biased composition (gly residues).

The protein belongs to the universal ribosomal protein uL15 family. As to quaternary structure, part of the 50S ribosomal subunit.

Functionally, binds to the 23S rRNA. The polypeptide is Large ribosomal subunit protein uL15 (Neisseria meningitidis serogroup C (strain 053442)).